Here is a 495-residue protein sequence, read N- to C-terminus: UDP-N-acetylmuramate--L-alanine ligase (495 aa).

122-128 contacts ATP; sequence GTHGKTT.

The protein belongs to the MurCDEF family.

Its subcellular location is the cytoplasm. It carries out the reaction UDP-N-acetyl-alpha-D-muramate + L-alanine + ATP = UDP-N-acetyl-alpha-D-muramoyl-L-alanine + ADP + phosphate + H(+). It participates in cell wall biogenesis; peptidoglycan biosynthesis. Functionally, cell wall formation. In Mycobacterium leprae (strain TN), this protein is UDP-N-acetylmuramate--L-alanine ligase.